The chain runs to 147 residues: MFRGGTPVSLDNKGRLAVPARYRETLISLCAGHLIVTADPSKCLLIYPQPVWEPIEQKLNSLSSFNPQTRSLQRLLVGNACDVEMDGVGRILVPPSLRAFAGLNKEVVLVGQGAKFELWDSEKWNLQMESALAFRDGIPQELEGFSL.

SpoVT-AbrB domains follow at residues 5-51 and 80-123; these read GTPV…PQPV and ACDV…DSEK.

It belongs to the MraZ family. In terms of assembly, forms oligomers.

It localises to the cytoplasm. It is found in the nucleoid. In Nitrosospira multiformis (strain ATCC 25196 / NCIMB 11849 / C 71), this protein is Transcriptional regulator MraZ.